We begin with the raw amino-acid sequence, 475 residues long: Ribulose bisphosphate carboxylase large chain (475 aa).

A propeptide spanning residues 1-2 is cleaved from the precursor; sequence MS. Residue proline 3 is modified to N-acetylproline. The residue at position 14 (lysine 14) is an N6,N6,N6-trimethyllysine. Residues asparagine 123 and threonine 173 each coordinate substrate. Residue lysine 175 is the Proton acceptor of the active site. Position 177 (lysine 177) interacts with substrate. 3 residues coordinate Mg(2+): lysine 201, aspartate 203, and glutamate 204. Position 201 is an N6-carboxylysine (lysine 201). The active-site Proton acceptor is the histidine 294. 3 residues coordinate substrate: arginine 295, histidine 327, and serine 379.

It belongs to the RuBisCO large chain family. Type I subfamily. As to quaternary structure, heterohexadecamer of 8 large chains and 8 small chains; disulfide-linked. The disulfide link is formed within the large subunit homodimers. Mg(2+) is required as a cofactor. The disulfide bond which can form in the large chain dimeric partners within the hexadecamer appears to be associated with oxidative stress and protein turnover.

The protein localises to the plastid. It localises to the chloroplast. It catalyses the reaction 2 (2R)-3-phosphoglycerate + 2 H(+) = D-ribulose 1,5-bisphosphate + CO2 + H2O. The catalysed reaction is D-ribulose 1,5-bisphosphate + O2 = 2-phosphoglycolate + (2R)-3-phosphoglycerate + 2 H(+). Functionally, ruBisCO catalyzes two reactions: the carboxylation of D-ribulose 1,5-bisphosphate, the primary event in carbon dioxide fixation, as well as the oxidative fragmentation of the pentose substrate in the photorespiration process. Both reactions occur simultaneously and in competition at the same active site. In Eucalyptus globulus subsp. globulus (Tasmanian blue gum), this protein is Ribulose bisphosphate carboxylase large chain.